We begin with the raw amino-acid sequence, 186 residues long: GPI-anchored hemophore ARB_02741 (186 aa).

The first 18 residues, 1-18, serve as a signal peptide directing secretion; that stretch reads MKFSQAVIALAAATVVSA. The region spanning 19-108 is the CFEM domain; that stretch reads QLPDVPQCSL…SSKPSEPSTS (90 aa). Intrachain disulfides connect C26–C67, C30–C62, C40–C48, and C50–C83. D45 contributes to the heme binding site. The disordered stretch occupies residues 89-159; sequence PVSIPPVEES…NTGVPTQSTP (71 aa). A compositionally biased stretch (low complexity) spans 96-131; that stretch reads EESSSKPSEPSTSEAPTASPTESTPAPTTPAPTGTG. The span at 132–144 shows a compositional bias: gly residues; sequence SPSGTGAPGGPSG. Residues 148–159 show a composition bias toward polar residues; it reads FTNTGVPTQSTP. G163 carries the GPI-anchor amidated glycine lipid modification. A propeptide spans 164 to 186 (removed in mature form); sequence AASGLSANIGGMGAAILAIAAYL.

Belongs to the RBT5 family. Post-translationally, the GPI-anchor is attached to the protein in the endoplasmic reticulum and serves to target the protein to the cell surface. There, the glucosamine-inositol phospholipid moiety is cleaved off and the GPI-modified mannoprotein is covalently attached via its lipidless GPI glycan remnant to the 1,6-beta-glucan of the outer cell wall layer.

The protein resides in the secreted. It is found in the cell wall. It localises to the cell membrane. GPI-anchored cell wall protein involved in stabilizing the cell wall. In Arthroderma benhamiae (strain ATCC MYA-4681 / CBS 112371) (Trichophyton mentagrophytes), this protein is GPI-anchored hemophore ARB_02741.